The primary structure comprises 452 residues: Friend leukemia integration 1 transcription factor (452 aa).

Ser39 bears the Phosphoserine mark. One can recognise a PNT domain in the interval 112–198; that stretch reads PPPPNMTTNE…SHLTYLRESS (87 aa). The segment covering 202–214 has biased composition (polar residues); the sequence is YNTTSHTDPSSRL. Positions 202–272 are disordered; the sequence is YNTTSHTDPS…YQILGPTSSR (71 aa). Over residues 215-226 the composition is skewed to basic and acidic residues; it reads NVKEDPSYDSVR. A compositionally biased stretch (polar residues) spans 248–257; sequence QTMSKNTEQR. The segment at residues 281-361 is a DNA-binding region (ETS); that stretch reads IQLWQFLLEL…HGKRYAYKFD (81 aa).

It belongs to the ETS family. Can form homodimers or heterodimers with ETV6/TEL1.

It localises to the nucleus. Functionally, sequence-specific transcriptional activator. Recognizes the DNA sequence 5'-C[CA]GGAAGT-3'. The sequence is that of Friend leukemia integration 1 transcription factor (FLI1) from Bos taurus (Bovine).